We begin with the raw amino-acid sequence, 213 residues long: Probable nicotinate-nucleotide adenylyltransferase (213 aa).

This sequence belongs to the NadD family.

It catalyses the reaction nicotinate beta-D-ribonucleotide + ATP + H(+) = deamido-NAD(+) + diphosphate. The protein operates within cofactor biosynthesis; NAD(+) biosynthesis; deamido-NAD(+) from nicotinate D-ribonucleotide: step 1/1. In terms of biological role, catalyzes the reversible adenylation of nicotinate mononucleotide (NaMN) to nicotinic acid adenine dinucleotide (NaAD). In Shigella boydii serotype 18 (strain CDC 3083-94 / BS512), this protein is Probable nicotinate-nucleotide adenylyltransferase.